Reading from the N-terminus, the 260-residue chain is Hydroxyethylthiazole kinase 1 (260 aa).

Met39 lines the substrate pocket. ATP-binding residues include Arg115 and Thr160. Position 187 (Gly187) interacts with substrate.

The protein belongs to the Thz kinase family. The cofactor is Mg(2+).

The catalysed reaction is 5-(2-hydroxyethyl)-4-methylthiazole + ATP = 4-methyl-5-(2-phosphooxyethyl)-thiazole + ADP + H(+). It participates in cofactor biosynthesis; thiamine diphosphate biosynthesis; 4-methyl-5-(2-phosphoethyl)-thiazole from 5-(2-hydroxyethyl)-4-methylthiazole: step 1/1. Functionally, catalyzes the phosphorylation of the hydroxyl group of 4-methyl-5-beta-hydroxyethylthiazole (THZ). The sequence is that of Hydroxyethylthiazole kinase 1 from Streptococcus pneumoniae (strain 70585).